A 63-amino-acid chain; its full sequence is U-reduvitoxin-Pr4a (63 aa).

An N-terminal signal peptide occupies residues 1–19 (MKIFGLFLLIATYMALAFA). 3 disulfides stabilise this stretch: Cys-24–Cys-40, Cys-31–Cys-45, and Cys-39–Cys-52.

This sequence belongs to the venom Ptu1-like knottin family. In terms of tissue distribution, expressed by the venom gland.

The protein localises to the secreted. Binds reversibly and blocks P/Q-type voltage-gated calcium channels (Cav). The polypeptide is U-reduvitoxin-Pr4a (Platymeris rhadamanthus (Red spot assassin bug)).